The sequence spans 32 residues: Cytochrome b6-f complex subunit 7 (32 aa).

A helical transmembrane segment spans residues 5–25 (FIASASISFIITLIGLTLGFA).

It belongs to the PetM family. As to quaternary structure, the 4 large subunits of the cytochrome b6-f complex are cytochrome b6, subunit IV (17 kDa polypeptide, PetD), cytochrome f and the Rieske protein, while the 4 small subunits are PetG, PetL, PetM and PetN. The complex functions as a dimer.

The protein localises to the plastid. Its subcellular location is the chloroplast thylakoid membrane. Functionally, component of the cytochrome b6-f complex, which mediates electron transfer between photosystem II (PSII) and photosystem I (PSI), cyclic electron flow around PSI, and state transitions. The sequence is that of Cytochrome b6-f complex subunit 7 from Guillardia theta (Cryptophyte).